A 131-amino-acid chain; its full sequence is Large ribosomal subunit protein bL17 (131 aa).

This sequence belongs to the bacterial ribosomal protein bL17 family. As to quaternary structure, part of the 50S ribosomal subunit. Contacts protein L32.

The sequence is that of Large ribosomal subunit protein bL17 from Bordetella avium (strain 197N).